A 199-amino-acid polypeptide reads, in one-letter code: Recombination protein RecR (199 aa).

A C4-type zinc finger spans residues 59 to 74 (CLNCGNVGTSDICALC). In terms of domain architecture, Toprim spans 82-176 (GELCVVEDVA…KLTSLAQGVP (95 aa)).

It belongs to the RecR family.

Functionally, may play a role in DNA repair. It seems to be involved in an RecBC-independent recombinational process of DNA repair. It may act with RecF and RecO. The sequence is that of Recombination protein RecR from Ruegeria sp. (strain TM1040) (Silicibacter sp.).